The sequence spans 500 residues: Protein DETOXIFICATION 24 (500 aa).

The interval 1-20 (MSTQEEMEERLLREGSDAEG) is disordered. The next 12 helical transmembrane spans lie at 48-67 (SSLF…AFIG), 72-92 (LGLA…YGLM), 124-144 (IVDM…GPIL), 160-180 (IYPW…IQMY), 188-208 (AIVG…TWWC), 225-245 (VGSW…WCPF), 266-286 (ISSG…VLMA), 298-318 (AFSI…GFLG), 342-362 (VILT…LAFC), 384-404 (VILA…GVAV), 411-431 (IVAV…GLIL), and 441-461 (GLWS…CYII).

Belongs to the multi antimicrobial extrusion (MATE) (TC 2.A.66.1) family.

The protein resides in the membrane. The chain is Protein DETOXIFICATION 24 from Arabidopsis thaliana (Mouse-ear cress).